The chain runs to 231 residues: UPF0749 protein YlxW (231 aa).

Residues 1–34 (MRGKSAVLLSLIMLIAGFLISFSFQMTKENNKSA) form the signal peptide. Residues 44–94 (YALRDELLKQEKENKKFEKELYQKQNKVRQAENKLKKEKSEYYNVLEDTEK) adopt a coiled-coil conformation.

The protein belongs to the UPF0749 family.

May be involved in cell division and sporulation. This is UPF0749 protein YlxW (ylxW) from Bacillus subtilis (strain 168).